The following is a 368-amino-acid chain: Anaphase-promoting complex subunit MND2 (368 aa).

Disordered stretches follow at residues Ala140–Ile167 and Arg286–Pro336. The segment covering Glu149–Arg162 has biased composition (basic and acidic residues). Ser293 is modified (phosphoserine).

The protein belongs to the APC15 family. The APC/C is composed of at least 13 subunits that stay tightly associated throughout the cell cycle: APC1, APC2, APC4, APC5, APC9, APC11, CDC16, CDC23, CDC26, CDC27, DOC1, MND2 and SWM1. MND2 interacts directly with APC1, APC5 and CDC23.

The protein operates within protein modification; protein ubiquitination. Its function is as follows. Component of the anaphase promoting complex/cyclosome (APC/C), a cell cycle-regulated E3 ubiquitin-protein ligase complex that controls progression through mitosis and the G1 phase of the cell cycle. The APC/C is thought to confer substrate specificity and, in the presence of ubiquitin-conjugating E2 enzymes, it catalyzes the formation of protein-ubiquitin conjugates that are subsequently degraded by the 26S proteasome. In early mitosis, the APC/C is activated by CDC20 and targets securin PDS1, the B-type cyclin CLB5, and other anaphase inhibitory proteins for proteolysis, thereby triggering the separation of sister chromatids at the metaphase-to-anaphase transition. In late mitosis and in G1, degradation of CLB5 allows activation of the APC/C by CDH1, which is needed to destroy CDC20 and the B-type cyclin CLB2 to allow exit from mitosis and creating the low CDK state necessary for cytokinesis and for reforming prereplicative complexes in G1 prior to another round of replication. In Saccharomyces cerevisiae (strain ATCC 204508 / S288c) (Baker's yeast), this protein is Anaphase-promoting complex subunit MND2 (MND2).